Reading from the N-terminus, the 1274-residue chain is Paired amphipathic helix protein Sin3a (1274 aa).

Disordered stretches follow at residues 1 to 26 (MKRRLDDQESPVYAAQQRRIPGSTEA) and 85 to 110 (HHHPTAVQPHGGQVVQSHAHPAPPVA). A Phosphoserine modification is found at S10. Residues 119-189 (QRLKVEDALS…MGFNTFLPPG (71 aa)) form the PAH 1 domain. The interaction with HCFC1 stretch occupies residues 119-196 (QRLKVEDALS…PPGYKIEVQT (78 aa)). Residues K122 and K134 each participate in a glycyl lysine isopeptide (Lys-Gly) (interchain with G-Cter in SUMO2) cross-link. Residues 205 to 297 (PGQVHQIPTH…ISLGTAPSLQ (93 aa)) are disordered. Residues 205–479 (PGQVHQIPTH…KVRKALRSAE (275 aa)) are interaction with REST. A compositionally biased stretch (low complexity) spans 228–237 (SQPSSQSAPT). Residues 252 to 266 (KPSQLQAHTPASQQT) are compositionally biased toward polar residues. Over residues 267–282 (PPLPPYASPRSPPVQP) the composition is skewed to pro residues. Residue S277 is modified to Phosphoserine. At T284 the chain carries Phosphothreonine. A compositionally biased stretch (polar residues) spans 284-297 (TPVTISLGTAPSLQ). A PAH 2 domain is found at 300 to 383 (QPVEFNHAIN…SEFGQFLPDA (84 aa)). Residues 398 to 443 (DSVRNDHGGTVKKPQLNNKPQRPSQNGCQIRRHSGTGATPPVKKKP) form a disordered region. Residues 412–425 (QLNNKPQRPSQNGC) are compositionally biased toward polar residues. The 70-residue stretch at 457–526 (SKHGVGTESL…NWFKNFLGYK (70 aa)) folds into the PAH 3 domain. An interaction with SAP30 region spans residues 459 to 526 (HGVGTESLFF…NWFKNFLGYK (68 aa)). K470 is subject to N6-acetyllysine. The tract at residues 524–851 (GYKESVHLES…EMDVDEATGA (328 aa)) is interaction with NCOR1. The interval 525-660 (YKESVHLESF…KFRLDNTLGG (136 aa)) is interactions with SUDS3 and SAP130. K564 is covalently cross-linked (Glycyl lysine isopeptide (Lys-Gly) (interchain with G-Cter in SUMO2)). The tract at residues 688 to 830 (NPSIAVPIVL…IPDLLFAQRG (143 aa)) is interactions with HDAC1 and ARID4B. Phosphoserine is present on S833. The segment covering 835 to 847 (VEEEEEEEMDVDE) has biased composition (acidic residues). The disordered stretch occupies residues 835 to 865 (VEEEEEEEMDVDEATGAPKKHNGVGGSPPKS). Position 861 is a phosphoserine (S861). N6-acetyllysine occurs at positions 866 and 876. Residues 889–968 (VNNNWYIFMR…YYPAFLDMVR (80 aa)) are interaction with OGT. A coiled-coil region spans residues 904–933 (CLRLLRICSQAERQIEEENREREWEREVLG). Phosphoserine is present on residues S941, S1090, and S1113. The segment at 1137 to 1157 (CQRGREQQEKEGKEGNSKKTM) is disordered. The span at 1139 to 1157 (RGREQQEKEGKEGNSKKTM) shows a compositional bias: basic and acidic residues.

As to quaternary structure, interacts with ARID4B, BRMS1L, HCFC1, HDAC1, HDAC2, MXI1, SAP30L, SAP130, SFPQ and TOPORS. Interacts with OGT (via TPRs 1-6); the interaction mediates transcriptional repression in parallel with histone deacetylase. Interacts with BAZ2A, MXD1, MXD3, MXD4, MBD2, DACH1, NCOR1, NR4A2, REST, RLIM, SAP30, SETDB1, SMYD2, and SUDS3. Interacts with PHF12 in a complex composed of HDAC1, PHF12 and SAP30. Interacts with TET1; the interaction recruits SIN3A to gene promoters. The large PER complex involved in the histone deacetylation is composed of at least HDAC1, PER2, SFPQ and SIN3A. Interacts with KLF11. Interacts with PPHLN1. Found in a complex with YY1, GON4L and HDAC1. Interacts (via PAH2) with FOXK1. Interacts with FOXK2. Found in a complex composed of at least SINHCAF, SIN3A, HDAC1, SAP30, RBBP4, OGT and TET1. Interacts with SINHCAF. Interacts with SPHK2. SUMO1 sumoylated by TOPORS. Probably desumoylated by SENP2. In terms of tissue distribution, widely expressed. Highest levels in testis, lung and thymus. Expressed at relatively high levels throughout brain development. In adult mice, expression is high in neurogenic regions such as the subventricular zone, rostral migratory stream, olfactory bulb and dentate gyrus.

It is found in the nucleus. Its subcellular location is the nucleolus. Acts as a transcriptional repressor. Corepressor for REST. Interacts with MXI1 to repress MYC responsive genes and antagonize MYC oncogenic activities. Also interacts with MXD1-MAX heterodimers to repress transcription by tethering SIN3A to DNA. Acts cooperatively with OGT to repress transcription in parallel with histone deacetylation. Involved in the control of the circadian rhythms. Required for the transcriptional repression of circadian target genes, such as PER1, mediated by the large PER complex through histone deacetylation. Cooperates with FOXK1 to regulate cell cycle progression probably by repressing cell cycle inhibitor genes expression. Required for cortical neuron differentiation and callosal axon elongation. This Mus musculus (Mouse) protein is Paired amphipathic helix protein Sin3a (Sin3a).